Reading from the N-terminus, the 394-residue chain is Ribose-phosphate pyrophosphokinase 5, chloroplastic (394 aa).

A chloroplast-targeting transit peptide spans 1-33 (MASIVQPSPTFPALNLRRSSLIRPPSSVRFPLK). Residues Asp-202, His-204, Asp-213, and Asp-217 each coordinate Mg(2+). The tract at residues 288-303 (GKVAIMVDDMIDTAGT) is binding of phosphoribosylpyrophosphate.

The protein belongs to the ribose-phosphate pyrophosphokinase family.

Its subcellular location is the plastid. The protein resides in the chloroplast. The enzyme catalyses D-ribose 5-phosphate + ATP = 5-phospho-alpha-D-ribose 1-diphosphate + AMP + H(+). The sequence is that of Ribose-phosphate pyrophosphokinase 5, chloroplastic (PRS5) from Arabidopsis thaliana (Mouse-ear cress).